A 221-amino-acid chain; its full sequence is ATP synthase subunit delta (221 aa).

The segment covering 1–13 has biased composition (basic and acidic residues); it reads MGPVPEEHQRESE. The disordered stretch occupies residues 1–31; sequence MGPVPEEHQRESETVASNGANESGAAVTGIP.

The protein belongs to the ATPase delta chain family. F-type ATPases have 2 components, F(1) - the catalytic core - and F(0) - the membrane proton channel. F(1) has five subunits: alpha(3), beta(3), gamma(1), delta(1), epsilon(1). F(0) has three main subunits: a(1), b(2) and c(10-14). The alpha and beta chains form an alternating ring which encloses part of the gamma chain. F(1) is attached to F(0) by a central stalk formed by the gamma and epsilon chains, while a peripheral stalk is formed by the delta and b chains.

Its subcellular location is the cell inner membrane. Its function is as follows. F(1)F(0) ATP synthase produces ATP from ADP in the presence of a proton or sodium gradient. F-type ATPases consist of two structural domains, F(1) containing the extramembraneous catalytic core and F(0) containing the membrane proton channel, linked together by a central stalk and a peripheral stalk. During catalysis, ATP synthesis in the catalytic domain of F(1) is coupled via a rotary mechanism of the central stalk subunits to proton translocation. In terms of biological role, this protein is part of the stalk that links CF(0) to CF(1). It either transmits conformational changes from CF(0) to CF(1) or is implicated in proton conduction. This Granulibacter bethesdensis (strain ATCC BAA-1260 / CGDNIH1) protein is ATP synthase subunit delta.